The sequence spans 297 residues: Phosphatidylserine decarboxylase proenzyme (297 aa).

Active-site charge relay system; for autoendoproteolytic cleavage activity residues include aspartate 100, histidine 157, and serine 263. Serine 263 functions as the Schiff-base intermediate with substrate; via pyruvic acid; for decarboxylase activity in the catalytic mechanism. Serine 263 is subject to Pyruvic acid (Ser); by autocatalysis.

It belongs to the phosphatidylserine decarboxylase family. PSD-B subfamily. Prokaryotic type I sub-subfamily. As to quaternary structure, heterodimer of a large membrane-associated beta subunit and a small pyruvoyl-containing alpha subunit. It depends on pyruvate as a cofactor. Is synthesized initially as an inactive proenzyme. Formation of the active enzyme involves a self-maturation process in which the active site pyruvoyl group is generated from an internal serine residue via an autocatalytic post-translational modification. Two non-identical subunits are generated from the proenzyme in this reaction, and the pyruvate is formed at the N-terminus of the alpha chain, which is derived from the carboxyl end of the proenzyme. The autoendoproteolytic cleavage occurs by a canonical serine protease mechanism, in which the side chain hydroxyl group of the serine supplies its oxygen atom to form the C-terminus of the beta chain, while the remainder of the serine residue undergoes an oxidative deamination to produce ammonia and the pyruvoyl prosthetic group on the alpha chain. During this reaction, the Ser that is part of the protease active site of the proenzyme becomes the pyruvoyl prosthetic group, which constitutes an essential element of the active site of the mature decarboxylase.

It localises to the cell membrane. The catalysed reaction is a 1,2-diacyl-sn-glycero-3-phospho-L-serine + H(+) = a 1,2-diacyl-sn-glycero-3-phosphoethanolamine + CO2. It participates in phospholipid metabolism; phosphatidylethanolamine biosynthesis; phosphatidylethanolamine from CDP-diacylglycerol: step 2/2. Its function is as follows. Catalyzes the formation of phosphatidylethanolamine (PtdEtn) from phosphatidylserine (PtdSer). The polypeptide is Phosphatidylserine decarboxylase proenzyme (Glaesserella parasuis serovar 5 (strain SH0165) (Haemophilus parasuis)).